Here is a 512-residue protein sequence, read N- to C-terminus: Bestrophin-2 (512 aa).

Residues 1 to 31 lie on the Cytoplasmic side of the membrane; sequence MTVTYTARVAKARFGGFSKLLLLWRGSIYKL. Ala10 contributes to the Ca(2+) binding site. The helical transmembrane segment at 32-51 threads the bilayer; sequence LWRELLCFLGLFMALSAAYR. Over 52 to 60 the chain is Extracellular; that stretch reads FVLTEEQKR. Residues 61-82 traverse the membrane as a helical segment; the sequence is YFEKLVLYCDRYASLIPVSFVL. The Cytoplasmic segment spans residues 83–238; it reads GFYVTLVVHR…WISVPLVYTQ (156 aa). Residues 239–255 form a helical membrane-spanning segment; the sequence is VVTIAVYSYFLACLIGR. The Extracellular segment spans residues 256 to 274; sequence QFLDPAQGYKDHDLDLCVP. A helical transmembrane segment spans residues 275-288; it reads IFTLLQFFFYAGWL. The Cytoplasmic segment spans residues 289-512; it reads KVAEQLINPF…PIGEEEESLA (224 aa). 4 residues coordinate Ca(2+): Gln293, Asn296, Asp301, and Asp304. The segment at 453–512 is disordered; the sequence is VDLGQPEPESEPITGPESPALVPAPRAPSEPLTVVPLSGTRGPAPPWLPSPIGEEEESLA.

Belongs to the anion channel-forming bestrophin (TC 1.A.46) family. Calcium-sensitive chloride channel subfamily. Pentamer. Interacts with GLUL; this interaction tethers a fraction of GLUL to the membrane, causing a decrease of cytosolic glutamine synthase (GS) activity and inhibits the chloride channel activity of BEST2 by affecting the gating at the aperture in the absence of intracellular glutamate.

The protein resides in the cell membrane. The protein localises to the basolateral cell membrane. It catalyses the reaction chloride(in) = chloride(out). The catalysed reaction is iodide(out) = iodide(in). The enzyme catalyses hydrogencarbonate(in) = hydrogencarbonate(out). It carries out the reaction L-glutamate(out) = L-glutamate(in). It catalyses the reaction L-glutamine(out) = L-glutamine(in). With respect to regulation, chloride channel activity is allosterically inhibited by GLUL/glutamine synthase (GS) which affects the gating at the aperture in the absence of intracellular glutamate. Inhibitory effect of GLUL is relieved upon increasing of intracellular level of L-glutamate. In terms of biological role, ligand-gated anion channel that allows the movement of anions across cell membranes when activated by calcium (Ca2+). Transports a large specter of anions, namely mediates the movement of chloride, L-glutamate and iodide. Calcium-binding triggers the dilation of the aperture, but calcium-dependent gating is only effective when the size of the passing anion is bigger than the closed aperture. Mediates the calcium-activated hydrogencarbonate movement and participates in colonic hydrogencarbonate secretion concomitant with mucin secretion. In non-pigmented epithelium (NPE), mediates the efflux of intracellular L-glutamate; binding of intracellular L-glutamate activates and open both the neck and the aperture of the channel, leading to L-glutamate exit promoting chloride influx movement from the extracellular side in trans. Also exhibits a directional permeability for intracellular glutamine, in a similar manner as for L-glutamate. The protein is Bestrophin-2 of Bos taurus (Bovine).